A 137-amino-acid chain; its full sequence is MEAVLTKLDQEEKKALQNFHRCAWEETKNIINDFLEIPEERCTYKFNSYTKKMELLFTPEFHTAWHEVPECREFILNFLRLISGHRVVLKGPTFVFTKETKNLGIPSTINVDFQANIENMDDLQKGNLIGKMNIKEG.

It belongs to the asfivirus A137R family. In terms of assembly, interacts with host TBK1.

The protein resides in the virion. The protein localises to the host cytoplasm. In terms of biological role, plays a role in the inhibition of the host innate immune response. Mechanistically, promotes the autophagy-mediated lysosomal degradation of host TBK1 and affects IRF3 nuclear translocation to block type I IFN production. In Ornithodoros (relapsing fever ticks), this protein is Structural protein A137R.